A 1099-amino-acid chain; its full sequence is Carbamoyl phosphate synthase large chain (1099 aa).

Residues 1 to 402 are carboxyphosphate synthetic domain; it reads MPKRTDLKSV…ALQKALRSLE (402 aa). ATP is bound by residues arginine 129, arginine 169, glycine 175, glycine 176, glutamate 208, isoleucine 210, glutamate 215, glycine 241, valine 242, histidine 243, glutamine 285, and glutamate 299. One can recognise an ATP-grasp 1 domain in the interval 133–328; sequence KGVVERCGAE…IAKIATKLSL (196 aa). Mg(2+) contacts are provided by glutamine 285, glutamate 299, and asparagine 301. Mn(2+)-binding residues include glutamine 285, glutamate 299, and asparagine 301. Residues 403 to 546 form an oligomerization domain region; it reads QKGSQLDFSH…YHYSSYDEED (144 aa). The segment at 547 to 950 is carbamoyl phosphate synthetic domain; sequence EVALHSKPSI…AFAKSQAAAN (404 aa). Positions 677-868 constitute an ATP-grasp 2 domain; it reads SRVLDEAGLI…MAKAAALIGT (192 aa). Residues arginine 713, arginine 752, leucine 754, glutamate 759, glycine 784, isoleucine 785, histidine 786, serine 787, glutamine 827, and glutamate 839 each contribute to the ATP site. 3 residues coordinate Mg(2+): glutamine 827, glutamate 839, and asparagine 841. Glutamine 827, glutamate 839, and asparagine 841 together coordinate Mn(2+). The 149-residue stretch at 951–1099 folds into the MGS-like domain; that stretch reads NALPTEGKIF…AENLKALQNG (149 aa). An allosteric domain region spans residues 951 to 1099; the sequence is NALPTEGKIF…AENLKALQNG (149 aa).

It belongs to the CarB family. In terms of assembly, composed of two chains; the small (or glutamine) chain promotes the hydrolysis of glutamine to ammonia, which is used by the large (or ammonia) chain to synthesize carbamoyl phosphate. Tetramer of heterodimers (alpha,beta)4. Requires Mg(2+) as cofactor. Mn(2+) serves as cofactor.

It catalyses the reaction hydrogencarbonate + L-glutamine + 2 ATP + H2O = carbamoyl phosphate + L-glutamate + 2 ADP + phosphate + 2 H(+). The enzyme catalyses hydrogencarbonate + NH4(+) + 2 ATP = carbamoyl phosphate + 2 ADP + phosphate + 2 H(+). Its pathway is amino-acid biosynthesis; L-arginine biosynthesis; carbamoyl phosphate from bicarbonate: step 1/1. It functions in the pathway pyrimidine metabolism; UMP biosynthesis via de novo pathway; (S)-dihydroorotate from bicarbonate: step 1/3. Its function is as follows. Large subunit of the glutamine-dependent carbamoyl phosphate synthetase (CPSase). CPSase catalyzes the formation of carbamoyl phosphate from the ammonia moiety of glutamine, carbonate, and phosphate donated by ATP, constituting the first step of 2 biosynthetic pathways, one leading to arginine and/or urea and the other to pyrimidine nucleotides. The large subunit (synthetase) binds the substrates ammonia (free or transferred from glutamine from the small subunit), hydrogencarbonate and ATP and carries out an ATP-coupled ligase reaction, activating hydrogencarbonate by forming carboxy phosphate which reacts with ammonia to form carbamoyl phosphate. The chain is Carbamoyl phosphate synthase large chain from Arthrobacter sp. (strain FB24).